Reading from the N-terminus, the 514-residue chain is Peptide chain release factor 3 (514 aa).

The 261-residue stretch at 8–268 (KKRRTFAIIS…IFLKFAPEPH (261 aa)) folds into the tr-type G domain. GTP contacts are provided by residues 17 to 24 (SHPDAGKT), 85 to 89 (DTPGH), and 139 to 142 (NKLD).

Belongs to the TRAFAC class translation factor GTPase superfamily. Classic translation factor GTPase family. PrfC subfamily.

It localises to the cytoplasm. Increases the formation of ribosomal termination complexes and stimulates activities of RF-1 and RF-2. It binds guanine nucleotides and has strong preference for UGA stop codons. It may interact directly with the ribosome. The stimulation of RF-1 and RF-2 is significantly reduced by GTP and GDP, but not by GMP. In Streptococcus pneumoniae (strain CGSP14), this protein is Peptide chain release factor 3.